Here is a 766-residue protein sequence, read N- to C-terminus: MKTPWKVLLGLLGAAALVTIITVPVVLLNKGTDDATADSRKTYTLTDYLKNTYRLKLYSLRWISDHEYLYKQENNILVFNAEYGNSSVFLENSTFDEFGHSINDYSISPDGQFILLEYNYVKQWRHSYTASYDIYDLNKRQLITEERIPNNTQWVTWSPVGHKLAYVWNNDIYVKIEPNLPSYRITWTGKEDIIYNGITDWVYEEEVFSAYSALWWSPNGTFLAYAQFNDTEVPLIEYSFYSDESLQYPKTVRVPYPKAGAVNPTVKFFVVNTDSLSSVTNATSIQITAPASMLIGDHYLCDVTWATQERISLQWLRRIQNYSVMDICDYDESSGRWNCLVARQHIEMSTTGWVGRFRPSEPHFTLDGNSFYKIISNEEGYRHICYFQIDKKDCTFITKGTWEVIGIEALTSDYLYYISNEYKGMPGGRNLYKIQLSDYTKVTCLSCELNPERCQYYSVSFSKEAKYYQLRCSGPGLPLYTLHSSVNDKGLRVLEDNSALDKMLQNVQMPSKKLDFIILNETKFWYQMILPPHFDKSKKYPLLLDVYAGPCSQKADTVFRLNWATYLASTENIIVASFDGRGSGYQGDKIMHAINRRLGTFEVEDQIEAARQFSKMGFVDNKRIAIWGWSYGGYVTSMVLGSGSGVFKCGIAVAPVSRWEYYDSVYTERYMGLPTPEDNLDHYRNSTVMSRAENFKQVEYLLIHGTADDNVHFQQSAQISKALVDVGVDFQAMWYTDEDHGIASSTAHQHIYTHMSHFIKQCFSLP.

Over 1 to 6 (MKTPWK) the chain is Cytoplasmic. A helical; Signal-anchor for type II membrane protein transmembrane segment spans residues 7–28 (VLLGLLGAAALVTIITVPVVLL). The Extracellular portion of the chain corresponds to 29-766 (NKGTDDATAD…HFIKQCFSLP (738 aa)). 7 N-linked (GlcNAc...) asparagine glycosylation sites follow: Asn85, Asn92, Asn150, Asn219, Asn229, Asn281, and Asn321. Cystine bridges form between Cys328/Cys339, Cys385/Cys394, Cys444/Cys447, and Cys454/Cys472. An N-linked (GlcNAc...) asparagine glycan is attached at Asn520. Catalysis depends on Ser630, which acts as the Charge relay system. A disulfide bridge links Cys649 with Cys762. A glycan (N-linked (GlcNAc...) asparagine) is linked at Asn685. Catalysis depends on charge relay system residues Asp708 and His740.

The protein belongs to the peptidase S9B family. DPPIV subfamily. Monomer. Homodimer. Heterodimer with Seprase (FAP). Requires homodimerization for optimal dipeptidyl peptidase activity and T-cell costimulation. Found in a membrane raft complex, at least composed of BCL10, CARD11, DPP4 and IKBKB. Associates with collagen. Interacts with PTPRC; the interaction is enhanced in an interleukin-12-dependent manner in activated lymphocytes. Interacts (via extracellular domain) with ADA; does not inhibit its dipeptidyl peptidase activity. Interacts with CAV1 (via the N-terminus); the interaction is direct. Interacts (via cytoplasmic tail) with CARD11 (via PDZ domain); its homodimerization is necessary for interaction with CARD11. Interacts with IGF2R; the interaction is direct. Interacts with GPC3. Interacts with human coronavirus-EMC spike protein and acts as a receptor for this virus. As to quaternary structure, (Microbial infection) Interacts with MERS coronavirus/MERS-CoV spike protein. In terms of processing, the soluble form (Dipeptidyl peptidase 4 soluble form also named SDPP) derives from the membrane form (Dipeptidyl peptidase 4 membrane form also named MDPP) by proteolytic processing. N- and O-Glycosylated. Post-translationally, phosphorylated. Mannose 6-phosphate residues in the carbohydrate moiety are necessary for interaction with IGF2R in activated T-cells. Mannose 6-phosphorylation is induced during T-cell activation. In terms of tissue distribution, expressed specifically in lymphatic vessels but not in blood vessels in the skin, small intestine, esophagus, ovary, breast and prostate glands. Not detected in lymphatic vessels in the lung, kidney, uterus, liver and stomach (at protein level). Expressed in the poorly differentiated crypt cells of the small intestine as well as in the mature villous cells. Expressed at very low levels in the colon.

It localises to the secreted. It is found in the cell membrane. The protein localises to the apical cell membrane. Its subcellular location is the cell projection. The protein resides in the invadopodium membrane. It localises to the lamellipodium membrane. It is found in the cell junction. The protein localises to the membrane raft. The enzyme catalyses Release of an N-terminal dipeptide, Xaa-Yaa-|-Zaa-, from a polypeptide, preferentially when Yaa is Pro, provided Zaa is neither Pro nor hydroxyproline.. Inhibited by GPC3 and diprotin A. Cell surface glycoprotein receptor involved in the costimulatory signal essential for T-cell receptor (TCR)-mediated T-cell activation. Acts as a positive regulator of T-cell coactivation, by binding at least ADA, CAV1, IGF2R, and PTPRC. Its binding to CAV1 and CARD11 induces T-cell proliferation and NF-kappa-B activation in a T-cell receptor/CD3-dependent manner. Its interaction with ADA also regulates lymphocyte-epithelial cell adhesion. In association with FAP is involved in the pericellular proteolysis of the extracellular matrix (ECM), the migration and invasion of endothelial cells into the ECM. May be involved in the promotion of lymphatic endothelial cells adhesion, migration and tube formation. When overexpressed, enhanced cell proliferation, a process inhibited by GPC3. Also acts as a serine exopeptidase with a dipeptidyl peptidase activity that regulates various physiological processes by cleaving peptides in the circulation, including many chemokines, mitogenic growth factors, neuropeptides and peptide hormones such as brain natriuretic peptide 32. Removes N-terminal dipeptides sequentially from polypeptides having unsubstituted N-termini provided that the penultimate residue is proline. In terms of biological role, (Microbial infection) Acts as a receptor for human coronavirus MERS-CoV-2. In Homo sapiens (Human), this protein is Dipeptidyl peptidase 4.